Here is a 207-residue protein sequence, read N- to C-terminus: LexA repressor (207 aa).

Residues 28–48 (RAEIARRLGFKSPNAAEEHLK) constitute a DNA-binding region (H-T-H motif). Active-site for autocatalytic cleavage activity residues include S126 and K163.

Belongs to the peptidase S24 family. In terms of assembly, homodimer.

The enzyme catalyses Hydrolysis of Ala-|-Gly bond in repressor LexA.. Represses a number of genes involved in the response to DNA damage (SOS response), including recA and lexA. In the presence of single-stranded DNA, RecA interacts with LexA causing an autocatalytic cleavage which disrupts the DNA-binding part of LexA, leading to derepression of the SOS regulon and eventually DNA repair. This chain is LexA repressor, found in Marinomonas sp. (strain MWYL1).